The chain runs to 331 residues: Glycerophosphodiester phosphodiesterase 1 (331 aa).

The Cytoplasmic segment spans residues 1–3 (MWL). Residues 4–24 (WEDQGGLLGPFSFVLVLLLVV) form a helical membrane-spanning segment. The Lumenal segment spans residues 25–248 (TRSPFNACVL…PRYSVFWKQS (224 aa)). Residues 65–331 (VSAIAHRGGS…SMLEDCAPHF (267 aa)) form the GP-PDE domain. Positions 97 and 99 each coordinate Mg(2+). Asn-168 carries N-linked (GlcNAc...) asparagine glycosylation. Residue Asp-174 participates in Mg(2+) binding. The chain crosses the membrane as a helical span at residues 249 to 269 (VFVVLDILLDWSMHNVLWYLC). Topologically, residues 270 to 331 (GISAFLMQKD…SMLEDCAPHF (62 aa)) are cytoplasmic.

It belongs to the glycerophosphoryl diester phosphodiesterase family. In terms of assembly, interacts with PRAF2. Interacts with RGS16. The cofactor is Mg(2+). Post-translationally, N-glycosylated. In terms of tissue distribution, detected in heart, brain, lung, liver, skeletal muscle, kidney, pituitary and testis.

It is found in the cell membrane. The protein localises to the cytoplasmic vesicle membrane. The catalysed reaction is sn-glycero-3-phospho-1D-myo-inositol + H2O = myo-inositol + sn-glycerol 3-phosphate + H(+). It catalyses the reaction 1-O-(1Z-octadecenyl)-sn-glycero-3-phospho-(N-5Z,8Z,11Z,14Z-eicosatetraenoyl)-ethanolamine + H2O = 1-O-(1Z-octadecenyl)-sn-glycero-3-phosphate + N-(5Z,8Z,11Z,14Z-eicosatetraenoyl)-ethanolamine + H(+). It carries out the reaction 1-O-(1Z-octadecenyl)-sn-glycero-3-phospho-(N-9Z-octadecenoyl)-ethanolamine + H2O = 1-O-(1Z-octadecenyl)-sn-glycero-3-phosphate + N-(9Z-octadecenoyl) ethanolamine + H(+). The enzyme catalyses 1-O-(1Z-octadecenyl)-sn-glycero-3-phospho-N-hexadecanoyl-ethanolamine + H2O = 1-O-(1Z-octadecenyl)-sn-glycero-3-phosphate + N-hexadecanoylethanolamine + H(+). The catalysed reaction is N-(4Z,7Z,10Z,13Z,16Z,19Z)-docosahexaenoyl-sn-glycero-3-phosphoethanolamine + H2O = N-(4Z,7Z,10Z,13Z,16Z,19Z)-docosahexaenoyl ethanolamine + sn-glycerol 3-phosphate + H(+). It catalyses the reaction N-eicosanoyl-sn-glycero-3-phosphoethanolamine + H2O = N-eicosanoyl ethanolamine + sn-glycerol 3-phosphate + H(+). It carries out the reaction N-hexadecanoyl-sn-glycero-3-phosphoethanolamine + H2O = N-hexadecanoylethanolamine + sn-glycerol 3-phosphate + H(+). The enzyme catalyses N-(9Z-octadecenoyl)-sn-glycero-3-phosphoethanolamine + H2O = N-(9Z-octadecenoyl) ethanolamine + sn-glycerol 3-phosphate + H(+). The catalysed reaction is N-(5Z,8Z,11Z,14Z-eicosatetraenoyl)-sn-glycero-3-phosphoethanolamine + H2O = N-(5Z,8Z,11Z,14Z-eicosatetraenoyl)-ethanolamine + sn-glycerol 3-phosphate + H(+). Its activity is regulated as follows. Inhibited by EDTA, calcium chloride, and zinc chloride. Enhanced by magnesium chloride. Glycerophosphodiester phosphodiesterase activity can be modulated by G-protein signaling pathways. Hydrolyzes the phosphodiester bond of glycerophosphodiesters such as glycerophosphoinositol (GroPIns) and glycerophosphoethanolamine (GroPEth), to yield a glycerol phosphate and an alcohol. Hydrolyzes glycerophospho-N-acylethanolamines to N-acylethanolamines in the brain and participates in bioactive N-acylethanolamine biosynthesis such as anandamide (an endocannabinoid), N-palmitoylethanolamine (an anti-inflammatory), and N-oleoylethanolamine (an anorexic). In addition, has a lysophospholipase D activity by hydrolyzing N-acyl-lysoplasmenylethanolamine (N-acyl-lysoPlsEt) to N-acylethanolamine. However lysophospholipase D activity is lower than glycerophosphodiester phosphodiesterase activity. Has little or no activity towards glycerophosphocholine. This is Glycerophosphodiester phosphodiesterase 1 from Rattus norvegicus (Rat).